The sequence spans 274 residues: Large ribosomal subunit protein uL2 (274 aa).

Residues 223 to 274 (VAMNPVDHPHGGGEGRTGEGRHAVDPWGNLTKGYRTRNNKRTQSMIVSRRKK) form a disordered region. Residues 229 to 246 (DHPHGGGEGRTGEGRHAV) are compositionally biased toward basic and acidic residues.

The protein belongs to the universal ribosomal protein uL2 family. Part of the 50S ribosomal subunit. Forms a bridge to the 30S subunit in the 70S ribosome.

In terms of biological role, one of the primary rRNA binding proteins. Required for association of the 30S and 50S subunits to form the 70S ribosome, for tRNA binding and peptide bond formation. It has been suggested to have peptidyltransferase activity; this is somewhat controversial. Makes several contacts with the 16S rRNA in the 70S ribosome. The protein is Large ribosomal subunit protein uL2 of Verminephrobacter eiseniae (strain EF01-2).